Here is a 687-residue protein sequence, read N- to C-terminus: Dentin sialophosphoprotein (687 aa).

Residues 1 to 17 form the signal peptide; it reads MKTKIIIYICIWATAWA. The segment at 54–113 is disordered; the sequence is NNATNDDSPKGSELGRQVHSNGGYERDRNGSESIAVGGKSSPTQPILANAQGNSAKERED. N-linked (GlcNAc...) asparagine glycosylation is present at N55. Phosphothreonine; by CK2 is present on T57. A glycan (N-linked (GlcNAc...) asparagine) is linked at N82. Over residues 93 to 107 the composition is skewed to polar residues; it reads SSPTQPILANAQGNS. Residue N128 is glycosylated (N-linked (GlcNAc...) asparagine). Basic and acidic residues predominate over residues 146–160; the sequence is EAKESKVHGQPHQDT. Residues 146-687 form a disordered region; that stretch reads EAKESKVHGQ…SDSNHSTSDD (542 aa). The segment covering 161–194 has biased composition (polar residues); the sequence is KTGLASDTSQNGDATLVQENEPQVAGSKNSTNHE. N-linked (GlcNAc...) asparagine glycosylation occurs at N189. Phosphoserine; by CK2 is present on S226. S253 carries the post-translational modification Phosphoserine; by CK1. Positions 262-275 are enriched in basic and acidic residues; it reads GDGRESHDGTEGHE. Over residues 276 to 292 the composition is skewed to polar residues; the sequence is GQSSGGNNDNRGQGSVS. S278 is modified (phosphoserine; by CK1). S292 carries the post-translational modification Phosphoserine; by CK2. S298 carries the post-translational modification Phosphoserine; by CK1. Residue N312 is glycosylated (N-linked (GlcNAc...) asparagine). A Phosphoserine; by CK2 modification is found at S315. T319 and T329 each carry phosphothreonine; by CK2. Phosphoserine; by CK2 occurs at positions 337 and 345. Positions 352 to 375 are enriched in polar residues; the sequence is SGQSQNQGLETEGSSTGNKSSITK. S366 is subject to Phosphoserine; by CK1. N-linked (GlcNAc...) asparagine glycosylation is present at N369. The span at 386–417 shows a compositional bias: basic and acidic residues; the sequence is SNGHHGMELDKRNSPKQGESDKPQGAAEKSDT. The span at 418-432 shows a compositional bias: polar residues; that stretch reads HNNMGHSRIGSSSNS. Residues 447–460 are compositionally biased toward low complexity; the sequence is GDDPNSSDESNGSD. A compositionally biased stretch (acidic residues) spans 500–521; sequence DDSSDDTSDTDDSDSNGDDDSE. Positions 522–545 are enriched in basic and acidic residues; that stretch reads SKDKDESDNSNHDNDSDSESKSDS. Residues 555 to 598 show a composition bias toward low complexity; it reads SSDSSDSSDSSETSDSSDSSDTSDSSDSSDSSDSSNSSDTSDSS. Acidic residues predominate over residues 599–617; it reads DSSDGDSSDGDSSDSDSSD. Residues 618-639 show a composition bias toward low complexity; it reads SDSSNSSDSDSSDSSDSSSSDS. Positions 667-677 are enriched in acidic residues; the sequence is SDSDSDSDSEG. Residues 678 to 687 are compositionally biased toward low complexity; sequence SDSNHSTSDD.

As to quaternary structure, interacts with FBLN7. In terms of processing, DSP is glycosylated. In terms of tissue distribution, specifically expressed in teeth, mainly in odontoblasts and transiently in pre-ameloblasts.

The protein localises to the secreted. The protein resides in the extracellular space. It is found in the extracellular matrix. In terms of biological role, DSP may be an important factor in dentinogenesis. DPP may bind high amount of calcium and facilitate initial mineralization of dentin matrix collagen as well as regulate the size and shape of the crystals. The sequence is that of Dentin sialophosphoprotein (Dspp) from Rattus norvegicus (Rat).